Reading from the N-terminus, the 997-residue chain is Protein translocase subunit SecA (997 aa).

Residues Gln84, 102 to 106 (GEGKT), and Asp582 contribute to the ATP site. The interval 950 to 997 (PYVPVPEAKPEPSEVFGVERKRATPPPQPGLSRAERRRLMRQEKKRKK) is disordered. The span at 957-971 (AKPEPSEVFGVERKR) shows a compositional bias: basic and acidic residues. A compositionally biased stretch (basic residues) spans 984–997 (ERRRLMRQEKKRKK).

It belongs to the SecA family. In terms of assembly, monomer and homodimer. Part of the essential Sec protein translocation apparatus which comprises SecA, SecYEG and auxiliary proteins SecDF. Other proteins may also be involved.

It localises to the cell inner membrane. Its subcellular location is the cytoplasm. The enzyme catalyses ATP + H2O + cellular proteinSide 1 = ADP + phosphate + cellular proteinSide 2.. Part of the Sec protein translocase complex. Interacts with the SecYEG preprotein conducting channel. Has a central role in coupling the hydrolysis of ATP to the transfer of proteins into and across the cell membrane, serving as an ATP-driven molecular motor driving the stepwise translocation of polypeptide chains across the membrane. The protein is Protein translocase subunit SecA of Thermus thermophilus (strain ATCC BAA-163 / DSM 7039 / HB27).